Here is a 249-residue protein sequence, read N- to C-terminus: MTVEDLKATVAKLQERIQYLEKKAGLVPDVPKSVRMVLIGPPGAGKGTQAPNLKEKFCACHLATGDMLRAQVAAKTALGVEAKKIMDQGGLVSDEIMVNMIKSELENNKECANGFILDGFPRTIPQAEKLDSMLVDRKTPLENAIELKIDDELLVARITGRLVHPASGRSYHKLFNPPKKNMIDDITGEPLVQRSDDNEAALKKRLVTYHKQTEPIVDYYRKTGIWSGIDASQKPATVWTDILKCLGQK.

An ATP-binding site is contributed by 43–48 (GAGKGT). The segment at 63–92 (ATGDMLRAQVAAKTALGVEAKKIMDQGGLV) is NMP. AMP-binding positions include Thr-64, Arg-69, 90 to 92 (GLV), 119 to 122 (GFPR), and Gln-126. An LID region spans residues 160–197 (GRLVHPASGRSYHKLFNPPKKNMIDDITGEPLVQRSDD). ATP contacts are provided by residues Arg-161 and 170–171 (SY). 2 residues coordinate AMP: Arg-194 and Arg-205. An ATP-binding site is contributed by Gln-233.

It belongs to the adenylate kinase family. AK2 subfamily. In terms of assembly, monomer.

Its subcellular location is the cytoplasm. It is found in the cytosol. It localises to the mitochondrion intermembrane space. The enzyme catalyses AMP + ATP = 2 ADP. Functionally, catalyzes the reversible transfer of the terminal phosphate group between ATP and AMP. Plays an important role in cellular energy homeostasis and in adenine nucleotide metabolism. Adenylate kinase activity is critical for regulation of the phosphate utilization and the AMP de novo biosynthesis pathways. The sequence is that of Adenylate kinase from Scheffersomyces stipitis (strain ATCC 58785 / CBS 6054 / NBRC 10063 / NRRL Y-11545) (Yeast).